Here is a 338-residue protein sequence, read N- to C-terminus: Ketol-acid reductoisomerase (NADP(+)) (338 aa).

The region spanning 1–181 (MQVYYDKDAD…GGGRAGVIET (181 aa)) is the KARI N-terminal Rossmann domain. NADP(+) contacts are provided by residues 24-27 (YGSQ), Arg47, Ser50, Ser52, and 82-85 (DEHQ). Residue His107 is part of the active site. Gly133 is a binding site for NADP(+). Positions 182 to 327 (SFKDETETDL…AKLRDMMPWI (146 aa)) constitute a KARI C-terminal knotted domain. Mg(2+) contacts are provided by Asp190, Glu194, Glu226, and Glu230. Residue Ser251 coordinates substrate.

The protein belongs to the ketol-acid reductoisomerase family. The cofactor is Mg(2+).

The catalysed reaction is (2R)-2,3-dihydroxy-3-methylbutanoate + NADP(+) = (2S)-2-acetolactate + NADPH + H(+). It catalyses the reaction (2R,3R)-2,3-dihydroxy-3-methylpentanoate + NADP(+) = (S)-2-ethyl-2-hydroxy-3-oxobutanoate + NADPH + H(+). It participates in amino-acid biosynthesis; L-isoleucine biosynthesis; L-isoleucine from 2-oxobutanoate: step 2/4. The protein operates within amino-acid biosynthesis; L-valine biosynthesis; L-valine from pyruvate: step 2/4. Functionally, involved in the biosynthesis of branched-chain amino acids (BCAA). Catalyzes an alkyl-migration followed by a ketol-acid reduction of (S)-2-acetolactate (S2AL) to yield (R)-2,3-dihydroxy-isovalerate. In the isomerase reaction, S2AL is rearranged via a Mg-dependent methyl migration to produce 3-hydroxy-3-methyl-2-ketobutyrate (HMKB). In the reductase reaction, this 2-ketoacid undergoes a metal-dependent reduction by NADPH to yield (R)-2,3-dihydroxy-isovalerate. The chain is Ketol-acid reductoisomerase (NADP(+)) from Thioalkalivibrio sulfidiphilus (strain HL-EbGR7).